Reading from the N-terminus, the 361-residue chain is Protein RecA (361 aa).

ATP is bound at residue 77 to 84 (GPESSGKT).

Belongs to the RecA family.

The protein resides in the cytoplasm. In terms of biological role, can catalyze the hydrolysis of ATP in the presence of single-stranded DNA, the ATP-dependent uptake of single-stranded DNA by duplex DNA, and the ATP-dependent hybridization of homologous single-stranded DNAs. It interacts with LexA causing its activation and leading to its autocatalytic cleavage. The protein is Protein RecA of Rhizobium rhizogenes (strain K84 / ATCC BAA-868) (Agrobacterium radiobacter).